The chain runs to 205 residues: Protein N-terminal glutamine amidohydrolase (205 aa).

Catalysis depends on residues C20, H74, and D90.

It belongs to the NTAQ1 family. As to quaternary structure, monomer.

The enzyme catalyses N-terminal L-glutaminyl-[protein] + H2O = N-terminal L-glutamyl-[protein] + NH4(+). In terms of biological role, mediates the side-chain deamidation of N-terminal glutamine residues to glutamate, an important step in N-end rule pathway of protein degradation. Conversion of the resulting N-terminal glutamine to glutamate renders the protein susceptible to arginylation, polyubiquitination and degradation as specified by the N-end rule. Does not act on substrates with internal or C-terminal glutamine and does not act on non-glutamine residues in any position. The sequence is that of Protein N-terminal glutamine amidohydrolase (tun) from Drosophila melanogaster (Fruit fly).